Reading from the N-terminus, the 2437-residue chain is MSKVFVDIEAESPFLKSLQRAFPAFEVEAQQVTPNDHANARAFSHLATKLIEQETEKDTLILDIGSAPARRMMSEHTYHCVCPMRSAEDPERLLYYARKLAKASGEVVDRNIAAKIDDLQSVMATPDNESRTFCLHTDQTCRTQAEVAVYQDVYAVHAPTSLYFQAMKGVRTAYWIGFDTTPFMFDTMAGAYPTYATNWADEQVLKARNIGLCSASLTEGHLGKLSIMRKKKMTPSDQIMFSVGSTLYIESRRLLKSWHLPSVFHLKGRQSYTCRCDTIVSCEGYVVKKITMSPGVFGKTSGYAVTHHAEGFLVCKTTDTIAGERVSFPICTYVPSTICDQMTGILATEVTPEDAQKLLVGLNQRIVVNGRTQRNTNTMKNYLLPVVSQAFSKWAKEYRLDQEDEKNMGMRERTLTCCCLWAFKTHKNHTMYKKPDTQTIVKVPSEFNSFVIPSLWSAGLSIGIRHRIRLLLQSRRVEPLVPSMDVGEARAAEREAAEAKEAEDTLAALPPLIPTAPVLDDIPEVDVEELEFRAGAGVVETPRNALKVTPQDRDTMVGSYLVLSPQTVLKSVKLQALHPLAESVKIITHKGRAGRYQVDAYDGRVLLPTGAAIPVPDFQALSESATMVYNEREFINRKLYHIAVHGAALNTDEEGYEKVRAESTDAEYVYDVDRKQCVKREEAEGLVMIGDLINPPFHEFAYEGLKRRPAAPYKTTVVGVFGVPGSGKSGIIKSLVTRGDLVASGKKENCQEIMLDVKRYRDLDMTAKTVDSVLLNGVKQTVDVLYVDEAFACHAGTLLALIATVRPRKKVVLCGDPKQCGFFNLMQLQVNFNHNICTEVDHKSISRRCTLPITAIVSTLHYEGRMRTTNPYNKPVIIDTTGQTKPNREDIVLTCFRGWVKQLQLDYRGHEVMTAAASQGLTRKGVYAVRMKVNENPLYAQSSEHVNVLLTRTEGRLVWKTLSGDPWIKTLSNIPKGNFTATLEDWQREHDTIMRAITQEAAPLDVFQNKAKVCWAKCLVPVLETAGIKLSATDWSAIILAFKEDRAYSPEVALNEICTKIYGVDLDSGLFSAPRVSLHYTTNHWDNSPGGRMYGFSVEAANRLEQQHPFYRGRWASGQVLVAERKTQPIDVTCNLIPFNRRLPHTLVTEYHPIKGERVEWLVNKIPGYHVLLVSEYNLILPRRKVTWIAPPTVTGADLTYDLDLGLPPNAGRYDLVFVNMHTPYRLHHYQQCVDHAMKLQMLGGDALYLLKPGGSLLLSTYAYADRTSEAVVTALARRFSSFRAVTVRCVTSNTEVFLLFTNFDNGRRTVTLHQTNGKLSSIYAGTVLQAAGCAPAYAVKRADIATAIEDAVVNAANHRGQVGDGVCRAVARKWPQAFRNAATPVGTAKTVKCDETYIIHAVGPNFNNTSEAEGDRDLAAAYRAVAAEINRLSISSVAIPLLSTGIFSAGKDRVHQSLSHLLAAMDTTEARVTIYCRDKTWEQKIKTVLQNRSATELVSDELQFEVNLTRVHPDSSLVGRPGYSTTDGTLYSYMEGTKFHQAALDMAEITTLWPRVQDANEHICLYALGETMDNIRARCPVEDSDSSTPPKTVPCLCRYAMTPERVTRLRMHHTKDFVVCSSFQLPKYRIPGVQRVKCEKVMLFDAAPPASVSPVQYLTNQSETTISLSSFSITSDSSSLSTFPDLESAEELDHDSQSVRPALNEPDDHQPTPTAELATHPVPPPRPNRARRLAAARVQVQVEVHQPPSNQPTKPIPAPRTSLRPVPAPRRYVPRPVVELPWPLETIDVEFGAPTEEESDITFGDFSASEWETISNSSXLGRAGAYIFSSDVGPGHLQQKSVRQHDLEVPIMDRVIEEKVYPPKLDEAKEKQLLLKLQMHATDANRSRYQSRKVENMKATIIDRLKQGSAYYVSAAADKAVTYHVRYAKPRYSVPVMQRLSSATIAVATCNEFLARNYPTVASYQITDEYDAYLDMVDGSESCLDRANFCPAKLRCYPKHHAYHMPQIRSAVPSPFQNTLQNVLAAATKRNCNVTQMRELPTLDSAVYNVECFRKYACNNEYWEEFAKKPIRITTENLTTYVTKLKGGKAAALFAKTHNLVPLQEVPMDRFIMDMKRDVKVTPGTKHTEERPKVQVIQAAEPLATAYLCGIHRELVRRLNAVLLPNIHTLFDMSAEDFDAIISEHFKPGDHVLETDIASFDKSQDDSLALTGLMILEDLGVDNQLLDLIEAAFGQITSCHLPTGTRFKFGAMMKSGMFLTLFINTVLNITIASRVLEARLTNSACAAFIGDDNVVHGVVSDKLMADRCATWVNMEVKIIDAVMCIKPPYFCGGFLVYDHVTRTACRIADPLKRLFKLGKPLPADDCQDEDRRRALYDEVKKWSRSGLGSEIEVALASRYRLEGSYNLLLAMSTFAHSMKNFSALRGPVIHLYGGPK.

The Alphavirus-like MT domain occupies glutamate 28–histidine 259. Residues glycine 244–valine 263 form a nsP1 membrane-binding region. S-palmitoyl cysteine; by host attachment occurs at residues cysteine 417 and cysteine 419. The 153-residue stretch at aspartate 691–lysine 843 folds into the (+)RNA virus helicase ATP-binding domain. Residue glycine 722–serine 729 participates in a ribonucleoside 5'-triphosphate binding. Positions serine 844–threonine 992 constitute a (+)RNA virus helicase C-terminal domain. The region spanning aspartate 1005–threonine 1327 is the Peptidase C9 domain. The segment at valine 1006 to threonine 1025 is nucleolus localization signal. The active-site For cysteine protease nsP2 activity is the cysteine 1014. Residues threonine 1059–serine 1068 carry the Nuclear export signal motif. Residue histidine 1084 is the For cysteine protease nsP2 activity of the active site. Positions proline 1182–valine 1186 match the Nuclear localization signal motif. Residues alanine 1335–arginine 1493 enclose the Macro domain. The ADP-D-ribose site is built by aspartate 1344, asparagine 1358, glycine 1366, glycine 1446, isoleucine 1447, and phenylalanine 1448. Positions 1596, 1598, 1621, and 1639 each coordinate Zn(2+). The span at threonine 1675–phenylalanine 1684 shows a compositional bias: low complexity. Residues threonine 1675 to asparagine 1729 are disordered. 2 consecutive short sequence motifs (FGDF; binding to host G3BP1) follow at residues phenylalanine 1792–proline 1795 and phenylalanine 1804–phenylalanine 1807. A RdRp catalytic domain is found at aspartate 2191 to alanine 2306.

Interacts with non-structural protein 3. Interacts with RNA-directed RNA polymerase nsP4. Interacts with protease nsP2. interacts with itself. As to quaternary structure, interacts with mRNA-capping enzyme nsP1. Interacts with host DDX1. Interacts with host DDX3. Interacts (via C-terminus) with host G3BP1; this interaction inhibits the formation of host stress granules on viral mRNAs and the nsp3-G3BP1 complexes bind viral RNAs and probably orchestrate the assembly of viral replication complexes. Interacts (via C-terminus) with host G3BP2; this interaction inhibits the formation of host stress granules on viral mRNAs and the nsp3-G3BP2 complexes bind viral RNAs and probably orchestrate the assembly of viral replication complexes. In terms of assembly, interacts with mRNA-capping enzyme nsP1. Interacts with protease nsP2. interacts with itself. Interacts with RNA-directed RNA polymerase nsP4. Interacts with mRNA-capping enzyme nsP1. Interacts with KPNA1/karyopherin-alpha1; this interaction probably allows the active transport of protease nsP2 into the host nucleus. Interacts with host POLR2A/RPB1; this interaction seems to induce the depletion of host POLR2A and may play a role in the transcriptional shutoff induced by protease nsP2. Interacts with host GTF2E2/TF2E2; this interaction seems to induce the depletion of host GTF2E2/TF2E2 and may play a role in the transcriptional shutoff induced by protease nsP2. Requires Mg(2+) as cofactor. Mn(2+) serves as cofactor. Specific enzymatic cleavages in vivo yield mature proteins. The processing of the polyprotein is temporally regulated. In early stages (1.7 hpi), P1234 is first cleaved in trans through its nsP2 protease activity, releasing P123' and nsP4, which associate to form the early replication complex. At the same time, P1234 is also cut at the nsP1/nsP2 site early in infection but with lower efficiency. After replication of the viral minus-strand RNAs (4 hpi), the polyproteins are cut at the nsP1/nsP2 and nsP2/nsP3 sites very efficiently, preventing accumulation of P123' and P1234 and allowing the formation of the late replication complex. NsP3'/nsP4 site is not cleaved anymore and P34 is produced rather than nsP4. In terms of processing, specific enzymatic cleavages in vivo yield mature proteins. The processing of the polyprotein is temporally regulated. In early stages (1.7 hpi), P123 is cleaved at the nsP1/nsP2 site with low efficiency. After replication of the viral minus-strand RNAs (4 hpi), the polyproteins are cut at the nsP1/nsP2 and nsP2/nsP3 sites very efficiently, preventing accumulation of P123 and allowing the formation of the late replication complex. Post-translationally, specific enzymatic cleavages in vivo yield mature proteins. The processing of the polyprotein is temporally regulated. In early stages (1.7 hpi), P123' is cleaved at the nsP1/nsP2 site with low efficiency. After replication of the viral minus-strand RNAs (4 hpi), the polyproteins are cut at the nsP1/nsP2 and nsP2/nsP3 sites very efficiently, preventing accumulation of P123' and allowing the formation of the late replication complex. Palmitoylated by host palmitoyltransferases ZDHHC2 and ZDHHC19. In terms of processing, phosphorylated by host on serines and threonines. Post-translationally, ubiquitinated; targets the protein for rapid degradation via the ubiquitin system. Nsp4 is present in extremely low quantities due to low frequency of translation through the amber stop-codon and the degradation by the ubiquitin pathway.

It is found in the host cytoplasmic vesicle membrane. Its subcellular location is the host cell membrane. The protein localises to the host cell projection. It localises to the host filopodium. The protein resides in the host nucleus. It is found in the host cytoplasm. It catalyses the reaction GTP + S-adenosyl-L-methionine = N(7)-methyl-GTP + S-adenosyl-L-homocysteine. The enzyme catalyses N(7)-methyl-GTP + L-histidyl-[protein] = N(tele)-(N(7)-methylguanosine 5'-phospho)-L-histidyl-[protein] + diphosphate. It carries out the reaction N(tele)-(N(7)-methylguanosine 5'-phospho)-L-histidyl-[protein] + a 5'-end diphospho-(purine-ribonucleoside) in mRNA + H(+) = a 5'-end (N(7)-methyl 5'-triphosphoguanosine)-(purine-ribonucleoside) in mRNA + L-histidyl-[protein]. The catalysed reaction is a 5'-end triphospho-ribonucleoside in mRNA + H2O = a 5'-end diphospho-ribonucleoside in mRNA + phosphate + H(+). It catalyses the reaction a ribonucleoside 5'-triphosphate + H2O = a ribonucleoside 5'-diphosphate + phosphate + H(+). The enzyme catalyses ATP + H2O = ADP + phosphate + H(+). It carries out the reaction RNA(n) + a ribonucleoside 5'-triphosphate = RNA(n+1) + diphosphate. The catalysed reaction is RNA(n) + ATP = RNA(n)-3'-adenine ribonucleotide + diphosphate. It catalyses the reaction 4-O-(ADP-D-ribosyl)-L-aspartyl-[protein] + H2O = L-aspartyl-[protein] + ADP-D-ribose + H(+). The enzyme catalyses 5-O-(ADP-D-ribosyl)-L-glutamyl-[protein] + H2O = L-glutamyl-[protein] + ADP-D-ribose + H(+). It carries out the reaction ADP-alpha-D-ribose 1''-phosphate + H2O = ADP-D-ribose + phosphate. Inactive precursor of the viral replicase, which is activated by cleavages carried out by the viral protease nsP2. In terms of biological role, the early replication complex formed by the polyprotein P123 and nsP4 synthesizes minus-strand RNAs. As soon P123 is cleaved into mature proteins, the plus-strand RNAs synthesis begins. Functionally, the early replication complex formed by the polyprotein P123' and nsP4 synthesizes minus-strand RNAs. Polyprotein P123' is a short-lived polyprotein that accumulates during early stage of infection. As soon P123' is cleaved into mature proteins, the plus-strand RNAs synthesis begins. Its function is as follows. Cytoplasmic capping enzyme that catalyzes two virus-specific reactions: methyltransferase and nsP1 guanylyltransferase. mRNA-capping is necessary since all viral RNAs are synthesized in the cytoplasm, and host capping enzymes are restricted to the nucleus. The enzymatic reaction involves a covalent link between 7-methyl-GMP and nsP1, whereas eukaryotic capping enzymes form a covalent complex only with GMP. nsP1 capping consists in the following reactions: GTP is first methylated into 7-methyl-GMP and then is covalently linked to nsP1 to form the m7GMp-nsP1 complex from which 7-methyl-GMP complex is transferred to the mRNA to create the cap structure. NsP1 is needed for the initiation of the minus-strand RNAs synthesis. Probably serves as a membrane anchor for the replication complex composed of nsP1-nsP4. Palmitoylated nsP1 is remodeling host cell cytoskeleton, and induces filopodium-like structure formation at the surface of the host cell. Multifunctional protein whose N-terminus is part of the RNA polymerase complex and displays NTPase, RNA triphosphatase and helicase activities. NTPase and RNA triphosphatase are involved in viral RNA capping and helicase keeps a check on the dsRNA replication intermediates. The C-terminus harbors a protease that specifically cleaves the polyproteins and releases the mature proteins. Required for the shutoff of minus-strand RNAs synthesis. Specifically inhibits the host IFN response by promoting the nuclear export of host STAT1. Induces host transcription shutoff by inducing rapid proteasome-dependent degradation of POLR2A, a catalytic subunit of the RNAPII complex. The resulting inhibition of cellular protein synthesis serves to ensure maximal viral gene expression and to evade host immune response. In terms of biological role, seems to be essential for minus-strand RNAs and subgenomic 26S mRNAs synthesis. Displays mono-ADP-ribosylhydrolase activity. ADP-ribosylation is a post-translational modification that controls various processes of the host cell and the virus probably needs to revert it for optimal viral replication. Binds proteins of FXR family and sequesters them into the viral RNA replication complexes thereby inhibiting the formation of host stress granules on viral mRNAs. The nsp3'-FXR complexes bind viral RNAs and probably orchestrate the assembly of viral replication complexes, thanks to the ability of FXR family members to self-assemble and bind DNA. Functionally, seems to be essential for minus-strand RNAs and subgenomic 26S mRNAs synthesis. Displays mono-ADP-ribosylhydrolase activity. ADP-ribosylation is a post-translantional modification that controls various processes of the host cell and the virus probably needs to revert it for optimal viral replication. Binds proteins of G3BP family and sequesters them into the viral RNA replication complexes thereby inhibiting the formation of host stress granules on viral mRNAs. The nsp3-G3BP complexes bind viral RNAs and probably orchestrate the assembly of viral replication complexes, thanks to the ability of G3BP family members to self-assemble and bind DNA. Its function is as follows. RNA dependent RNA polymerase. Replicates genomic and antigenomic RNA by recognizing replications specific signals. The early replication complex formed by the polyprotein P123 and nsP4 synthesizes minus-strand RNAs. The late replication complex composed of fully processed nsP1-nsP4 is responsible for the production of genomic and subgenomic plus-strand RNAs. The core catalytic domain of nsP4 also possesses terminal adenylyltransferase (TATase) activity that is probably involved in maintenance and repair of the poly(A) tail, an element required for replication of the viral genome. This chain is Polyprotein P1234, found in Aedes aegypti (Yellowfever mosquito).